The chain runs to 66 residues: Large ribosomal subunit protein bL33c (66 aa).

This sequence belongs to the bacterial ribosomal protein bL33 family.

It is found in the plastid. Its subcellular location is the chloroplast. In Coffea arabica (Arabian coffee), this protein is Large ribosomal subunit protein bL33c.